A 124-amino-acid polypeptide reads, in one-letter code: Holo-[acyl-carrier-protein] synthase (124 aa).

Positions 8 and 56 each coordinate Mg(2+).

It belongs to the P-Pant transferase superfamily. AcpS family. It depends on Mg(2+) as a cofactor.

It is found in the cytoplasm. It catalyses the reaction apo-[ACP] + CoA = holo-[ACP] + adenosine 3',5'-bisphosphate + H(+). Functionally, transfers the 4'-phosphopantetheine moiety from coenzyme A to a Ser of acyl-carrier-protein. The polypeptide is Holo-[acyl-carrier-protein] synthase (Nitratidesulfovibrio vulgaris (strain ATCC 29579 / DSM 644 / CCUG 34227 / NCIMB 8303 / VKM B-1760 / Hildenborough) (Desulfovibrio vulgaris)).